The primary structure comprises 190 residues: Protein LZIC (190 aa).

The stretch at 2 to 63 forms a coiled coil; the sequence is ASRGKTETSK…SEFNDSLKKI (62 aa).

The protein belongs to the CTNNBIP1 family. Does not interact with CTNNB1. In terms of tissue distribution, ubiquitously expressed, with highest levels in kidney. Up-regulated in several cases of gastric cancers.

This Homo sapiens (Human) protein is Protein LZIC (LZIC).